We begin with the raw amino-acid sequence, 352 residues long: ATP synthase subunit a 2 (352 aa).

An N-terminal signal peptide occupies residues 1–26 (MRKKAISRILALVVPVLLSLNSQAFA). 7 helical membrane-spanning segments follow: residues 112–132 (VVMIWLAAILLVVIASAAGAS), 172–192 (FLPYLLTVFFFILVCNLLGLI), 195–215 (GATATGNINVTLTLSVFTFVI), 232–252 (HLTAGTHWALWIIMVPIEILG), 264–284 (LFANMTAGHIIILSLFFISFI), 289–309 (IVAVAVSIPFAIFIYLLELFV), and 310–330 (AFLQAYVFTMLSALFIGLATA).

This sequence belongs to the ATPase A chain family. F-type ATPases have 2 components, CF(1) - the catalytic core - and CF(0) - the membrane proton channel. CF(1) has five subunits: alpha(3), beta(3), gamma(1), delta(1), epsilon(1). CF(0) has four main subunits: a, b, b' and c.

The protein localises to the cell inner membrane. Key component of the proton channel; it plays a direct role in the translocation of protons across the membrane. This chain is ATP synthase subunit a 2, found in Chlorobaculum tepidum (strain ATCC 49652 / DSM 12025 / NBRC 103806 / TLS) (Chlorobium tepidum).